Here is a 119-residue protein sequence, read N- to C-terminus: NADH-quinone oxidoreductase subunit A (119 aa).

3 consecutive transmembrane segments (helical) span residues 7–27 (YPVL…VSIG), 63–83 (LVAI…PWGV), and 88–108 (IGWP…LGFA).

The protein belongs to the complex I subunit 3 family. NDH-1 is composed of 14 different subunits. Subunits NuoA, H, J, K, L, M, N constitute the membrane sector of the complex.

The protein localises to the cell inner membrane. The catalysed reaction is a quinone + NADH + 5 H(+)(in) = a quinol + NAD(+) + 4 H(+)(out). NDH-1 shuttles electrons from NADH, via FMN and iron-sulfur (Fe-S) centers, to quinones in the respiratory chain. The immediate electron acceptor for the enzyme in this species is believed to be ubiquinone. Couples the redox reaction to proton translocation (for every two electrons transferred, four hydrogen ions are translocated across the cytoplasmic membrane), and thus conserves the redox energy in a proton gradient. The sequence is that of NADH-quinone oxidoreductase subunit A from Burkholderia vietnamiensis (strain G4 / LMG 22486) (Burkholderia cepacia (strain R1808)).